The sequence spans 359 residues: Putative X-Core fused protein (359 aa).

Disordered regions lie at residues 25–48 and 312–359; these read SRGR…VPAD and NAPI…ESQC. Basic residues predominate over residues 325–352; that stretch reads VRRRGRSPRRRTPSPRRRRSESPRRRRS.

This Homo sapiens (Human) protein is Putative X-Core fused protein.